The primary structure comprises 117 residues: MKHLWFFLLLVAAPRWVLSQVQLQESGPGLVKPSETLSLTCTVSGYSISSGYYWGWIRQPPGKGLEWIGSIYHSGSTYYNPSLKSRVTISVDTSKNQFSLKLSSVTAADTAVYYCAR.

Positions 1-19 (MKHLWFFLLLVAAPRWVLS) are cleaved as a signal peptide. Residues 20–44 (QVQLQESGPGLVKPSETLSLTCTVS) are framework-1. Residues 20–117 (QVQLQESGPG…ADTAVYYCAR (98 aa)) enclose the Ig-like domain. Cysteine 41 and cysteine 115 form a disulfide bridge. Residues 45-53 (GYSISSGYY) are complementarity-determining-1. The segment at 54-70 (WGWIRQPPGKGLEWIGS) is framework-2. Positions 71–77 (IYHSGST) are complementarity-determining-2. The tract at residues 78–115 (YYNPSLKSRVTISVDTSKNQFSLKLSSVTAADTAVYYC) is framework-3. Residues 116–117 (AR) form a complementarity-determining-3 region.

As to quaternary structure, immunoglobulins are composed of two identical heavy chains and two identical light chains; disulfide-linked.

Its subcellular location is the secreted. It localises to the cell membrane. Functionally, v region of the variable domain of immunoglobulin heavy chains that participates in the antigen recognition. Immunoglobulins, also known as antibodies, are membrane-bound or secreted glycoproteins produced by B lymphocytes. In the recognition phase of humoral immunity, the membrane-bound immunoglobulins serve as receptors which, upon binding of a specific antigen, trigger the clonal expansion and differentiation of B lymphocytes into immunoglobulins-secreting plasma cells. Secreted immunoglobulins mediate the effector phase of humoral immunity, which results in the elimination of bound antigens. The antigen binding site is formed by the variable domain of one heavy chain, together with that of its associated light chain. Thus, each immunoglobulin has two antigen binding sites with remarkable affinity for a particular antigen. The variable domains are assembled by a process called V-(D)-J rearrangement and can then be subjected to somatic hypermutations which, after exposure to antigen and selection, allow affinity maturation for a particular antigen. In Homo sapiens (Human), this protein is Immunoglobulin heavy variable 4-38-2.